We begin with the raw amino-acid sequence, 341 residues long: Phosphate acyltransferase (341 aa).

The protein belongs to the PlsX family. As to quaternary structure, homodimer. Probably interacts with PlsY.

The protein localises to the cytoplasm. The catalysed reaction is a fatty acyl-[ACP] + phosphate = an acyl phosphate + holo-[ACP]. It functions in the pathway lipid metabolism; phospholipid metabolism. Its function is as follows. Catalyzes the reversible formation of acyl-phosphate (acyl-PO(4)) from acyl-[acyl-carrier-protein] (acyl-ACP). This enzyme utilizes acyl-ACP as fatty acyl donor, but not acyl-CoA. This chain is Phosphate acyltransferase, found in Saccharophagus degradans (strain 2-40 / ATCC 43961 / DSM 17024).